The chain runs to 70 residues: Small ribosomal subunit protein bS21B (70 aa).

It belongs to the bacterial ribosomal protein bS21 family.

The chain is Small ribosomal subunit protein bS21B from Cupriavidus metallidurans (strain ATCC 43123 / DSM 2839 / NBRC 102507 / CH34) (Ralstonia metallidurans).